The sequence spans 775 residues: 5-methyltetrahydropteroyltriglutamate--homocysteine methyltransferase (775 aa).

5-methyltetrahydropteroyltri-L-glutamate-binding positions include 16-19 (REMK) and K115. Residues 435–437 (IGS) and E488 each bind L-homocysteine. L-methionine contacts are provided by residues 435–437 (IGS) and E488. 5-methyltetrahydropteroyltri-L-glutamate-binding positions include 519 to 520 (RC) and W565. D603 lines the L-homocysteine pocket. Residue D603 coordinates L-methionine. E609 contacts 5-methyltetrahydropteroyltri-L-glutamate. The Zn(2+) site is built by H645, C647, and E669. Catalysis depends on H698, which acts as the Proton donor. C730 contacts Zn(2+).

The protein belongs to the vitamin-B12 independent methionine synthase family. The cofactor is Zn(2+).

It carries out the reaction 5-methyltetrahydropteroyltri-L-glutamate + L-homocysteine = tetrahydropteroyltri-L-glutamate + L-methionine. Its pathway is amino-acid biosynthesis; L-methionine biosynthesis via de novo pathway; L-methionine from L-homocysteine (MetE route): step 1/1. In terms of biological role, catalyzes the transfer of a methyl group from 5-methyltetrahydrofolate to homocysteine resulting in methionine formation. The protein is 5-methyltetrahydropteroyltriglutamate--homocysteine methyltransferase of Coxiella burnetii (strain CbuG_Q212) (Coxiella burnetii (strain Q212)).